We begin with the raw amino-acid sequence, 151 residues long: Guanylate kinase homolog (151 aa).

The region spanning 1-141 is the Guanylate kinase-like domain; that stretch reads MEREGVDYHY…AYSKLIQILQ (141 aa).

The protein belongs to the guanylate kinase family.

The chain is Guanylate kinase homolog from Bos taurus (Bovine).